Here is a 231-residue protein sequence, read N- to C-terminus: Phosphoglycolate phosphatase (231 aa).

The Nucleophile role is filled by D9. 2 residues coordinate Mg(2+): D9 and D11. K154 contacts substrate. Mg(2+)-binding residues include D177 and D181.

It belongs to the archaeal SPP-like hydrolase family. It depends on Mg(2+) as a cofactor.

The catalysed reaction is 2-phosphoglycolate + H2O = glycolate + phosphate. In terms of biological role, catalyzes the dephosphorylation of 2-phosphoglycolate. The sequence is that of Phosphoglycolate phosphatase from Nitrosopumilus maritimus (strain SCM1).